The sequence spans 288 residues: General transcription factor IIE subunit 2 (288 aa).

Residues 16 to 56 (ALTTPAVEKRPSASSESSKKKRAKLELSSTSGSKPSSDGSN) are disordered. The segment covering 41–56 (ELSSTSGSKPSSDGSN) has biased composition (low complexity). The TFIIE beta DNA-binding region spans 63 to 143 (SLSGSSGYKF…YAFKPKYNLK (81 aa)).

The protein belongs to the TFIIE beta subunit family. Tetramer of two alpha and two beta chains.

The protein resides in the nucleus. In terms of biological role, recruits TFIIH to the initiation complex and stimulates the RNA polymerase II C-terminal domain kinase and DNA-dependent ATPase activities of TFIIH. Both TFIIH and TFIIE are required for promoter clearance by RNA polymerase. The protein is General transcription factor IIE subunit 2 (gtf2e2) of Xenopus laevis (African clawed frog).